We begin with the raw amino-acid sequence, 71 residues long: Disintegrin viridin (71 aa).

The Disintegrin domain occupies 1–71; that stretch reads AGEECDCGSP…SADCPRNRFH (71 aa). Intrachain disulfides connect Cys-5/Cys-20, Cys-7/Cys-15, Cys-14/Cys-37, Cys-28/Cys-34, Cys-33/Cys-58, and Cys-46/Cys-65. A Cell attachment site motif is present at residues 50–52; that stretch reads RGD. Residues 50–71 are disordered; it reads RGDNPDDRCTGQSADCPRNRFH.

Belongs to the venom metalloproteinase (M12B) family. P-II subfamily. P-IIa sub-subfamily. Monomer (disintegrin). Expressed by the venom gland.

It localises to the secreted. Functionally, inhibits fibrinogen interaction with platelets. Acts by binding to alpha-IIb/beta-3 (ITGA2B/ITGB3) on the platelet surface and inhibits aggregation induced by ADP, thrombin, platelet-activating factor and collagen. This Crotalus viridis viridis (Prairie rattlesnake) protein is Disintegrin viridin.